The chain runs to 364 residues: 3-methyl-2-oxobutanoate hydroxymethyltransferase 1, mitochondrial (364 aa).

The N-terminal 59 residues, 1–59 (MMMMMRRAFRHLARQQRRPLSHVPESAVYGGPRPQDVGAAAGAGAGAGATRRVTVTTLR), are a transit peptide targeting the mitochondrion. Positions 94 and 133 each coordinate Mg(2+). 3-methyl-2-oxobutanoate contacts are provided by residues 94–95 (DS), Asp133, and Lys163. Glu165 provides a ligand contact to Mg(2+). Catalysis depends on Glu233, which acts as the Proton acceptor.

The protein belongs to the PanB family. The cofactor is Mg(2+).

The protein localises to the mitochondrion. The catalysed reaction is 3-methyl-2-oxobutanoate + (6R)-5,10-methylene-5,6,7,8-tetrahydrofolate + H2O = 2-dehydropantoate + (6S)-5,6,7,8-tetrahydrofolate. It functions in the pathway cofactor biosynthesis; (R)-pantothenate biosynthesis; (R)-pantoate from 3-methyl-2-oxobutanoate: step 1/2. Catalyzes the reversible reaction in which hydroxymethyl group from 5,10-methylenetetrahydrofolate is transferred onto alpha-ketoisovalerate to form ketopantoate. The sequence is that of 3-methyl-2-oxobutanoate hydroxymethyltransferase 1, mitochondrial (KPHMT1) from Oryza sativa subsp. japonica (Rice).